Consider the following 208-residue polypeptide: Component of Sp100-rs (208 aa).

The HSR domain occupies 6-121; that stretch reads GSPRMSTEQE…LRRSFECGAK (116 aa).

This Mus musculus (Mouse) protein is Component of Sp100-rs (Csprs).